The chain runs to 263 residues: Palmitoyltransferase ZDHHC22 (263 aa).

Over 1 to 9 the chain is Cytoplasmic; that stretch reads MLALRLLNV. The helical transmembrane segment at 10–30 threads the bilayer; that stretch reads VAPAYFLCISLVTFVLQLFLF. Topologically, residues 31-48 are lumenal; that stretch reads LPSMREDPAAARLFSPAL. Residues 49-69 form a helical membrane-spanning segment; the sequence is LHGALFLFLSANALGNYVLVI. Over 70-125 the chain is Cytoplasmic; it reads QNSPDDLGACQGASARKTPCPSPSTHFCRVCARVTLRHDHHCFFTGNCIGSRNMRN. In terms of domain architecture, DHHC spans 92–131; it reads PSTHFCRVCARVTLRHDHHCFFTGNCIGSRNMRNFVLFCL. Cys111 functions as the S-palmitoyl cysteine intermediate in the catalytic mechanism. 2 consecutive transmembrane segments (helical) span residues 126–146 and 147–167; these read FVLF…AGVA and YISA…TLLP. Topologically, residues 168–182 are cytoplasmic; sequence TSISQFFSGAVLGSE. The helical transmembrane segment at 183–203 threads the bilayer; sequence MFVILMLYLWFAIGLACAGFC. The Lumenal segment spans residues 204-263; it reads CHQLLLILRGQTRHQVRKGVAVRARPWRKNLQEVFGKRWLLGLLVPMFNVGSESSKQQDK.

This sequence belongs to the DHHC palmitoyltransferase family. As to quaternary structure, interacts with CNN3. Widely expressed.

Its subcellular location is the endoplasmic reticulum membrane. The protein localises to the golgi apparatus membrane. The catalysed reaction is L-cysteinyl-[protein] + hexadecanoyl-CoA = S-hexadecanoyl-L-cysteinyl-[protein] + CoA. Palmitoyltransferase that could catalyze the addition of palmitate onto various protein substrates and be involved in a variety of cellular processes. Catalyzes the palmitoylation of KCNMA1, regulating localization of KCNMA1 to the plasma membrane. Might also mediate palmitoylation of CNN3. In Homo sapiens (Human), this protein is Palmitoyltransferase ZDHHC22.